The primary structure comprises 220 residues: Probable glutathione S-transferase parA (220 aa).

The GST N-terminal domain maps to 4 to 83 (NNVVLLDFWP…YIDEVWHDKC (80 aa)). Glutathione contacts are provided by residues Ser-14, Lys-41, Ile-55, and 67 to 68 (ES). Residues 89 to 209 (DPYERSQARF…LPHPHKIYGF (121 aa)) enclose the GST C-terminal domain.

The protein belongs to the GST superfamily. HSP26 family.

It carries out the reaction RX + glutathione = an S-substituted glutathione + a halide anion + H(+). The protein is Probable glutathione S-transferase parA (PARA) of Nicotiana tabacum (Common tobacco).